Consider the following 513-residue polypeptide: Protein PNS1 (513 aa).

Residues 1–13 (MSNNNYPPPPNPP) show a composition bias toward pro residues. The segment at 1–41 (MSNNNYPPPPNPPNYQGEEQVHNVQPDLENNQEKYYAEQPQ) is disordered. Residues 1-60 (MSNNNYPPPPNPPNYQGEEQVHNVQPDLENNQEKYYAEQPQPSQQFEESFKIDKPKWNDW) are Cytoplasmic-facing. The chain crosses the membrane as a helical span at residues 61-81 (PFTVFFLLTVAGFIAIAGITL). Over 82-108 (NALKKTYGLQGSSIYNSTDTFTLNTNT) the chain is Extracellular. Asn-97 carries an N-linked (GlcNAc...) asparagine glycan. A helical transmembrane segment spans residues 109–129 (IILFGFIIVVGVVLSVLIIVY). The Cytoplasmic segment spans residues 130 to 136 (ARMAPRV). The chain crosses the membrane as a helical span at residues 137–157 (FITTGLILNIILGLGTCIYYF). The Extracellular segment spans residues 158 to 163 (VAHYYS). A helical membrane pass occupies residues 164 to 182 (AAIVFLVFTLFTAWCYWSC). The Cytoplasmic segment spans residues 183 to 210 (RHRIPFSATVLEITIDVMKRYPSTLITS). Residues 211–231 (FIGIIVSGLFSTLFSVVIVAT) traverse the membrane as a helical segment. Residues 232–251 (YVKYDPDSQGCDVAGGGCSQ) are Extracellular-facing. A helical membrane pass occupies residues 252–272 (SKLIGVLVFVFFAGYYISEVI). Residues 273 to 309 (KNVIHITIAGIYGTWYYLSNSDQGEPKHPALGAFKRA) are Cytoplasmic-facing. Residues 310–330 (MTYCFGSVCFGSLIVSIIQLI) traverse the membrane as a helical segment. Residues 331–346 (RSFVQILKQNAFGSGD) are Extracellular-facing. The chain crosses the membrane as a helical span at residues 347-367 (NCAGCGFLILDFVLGFIDWIV). Residues 368–412 (RYFNHYAYCYVALYGKSYLKSARDTFDLIRFKGMDALINDCFINT) are Cytoplasmic-facing. A helical transmembrane segment spans residues 413-433 (SLNLYSMFVGYVVALLAYFYL). Topologically, residues 434-460 (KFTDPAYNSSGTFYAPVVAFSFLISGQ) are extracellular. An N-linked (GlcNAc...) asparagine glycan is attached at Asn-441. Residues 461 to 481 (ITRIALTVISSGISTFFVALA) form a helical membrane-spanning segment. The Cytoplasmic segment spans residues 482 to 513 (KDPEVFQMTNRDRFDEIFRNYPQVLQKITSDH).

Belongs to the CTL (choline transporter-like) family.

The protein resides in the cell membrane. Its function is as follows. Probably involved in transport through the plasma membrane. This Debaryomyces hansenii (strain ATCC 36239 / CBS 767 / BCRC 21394 / JCM 1990 / NBRC 0083 / IGC 2968) (Yeast) protein is Protein PNS1 (PNS1).